The following is a 117-amino-acid chain: Cell division protein FtsL (117 aa).

The Cytoplasmic portion of the chain corresponds to 1 to 35 (MSNLAYQPEKQQRHAISPEKKVIVKKRASITLGEK). Residues 36 to 56 (VLLVLFAAAVLSVSLLIVSKA) traverse the membrane as a helical segment. Residues 57–117 (YAAYQTNIEV…KDKKVKNIQE (61 aa)) are Extracellular-facing.

It belongs to the FtsL family. Monomer. Interacts with DivIB and DivIC. Interaction with DivIC stabilizes FtsL against RasP cleavage. Cleaved by RasP. Cleavage is important for turnover and function of FtsL.

Its subcellular location is the cell membrane. Its function is as follows. Essential cell division protein that may play a structural role. Probably involved in the regulation of the timing of cell division. Also required for sporulation. This is Cell division protein FtsL from Bacillus subtilis (strain 168).